The chain runs to 134 residues: Retinoid-binding protein 7 (134 aa).

The protein belongs to the calycin superfamily. Fatty-acid binding protein (FABP) family. In terms of tissue distribution, highly expressed in white adipose tissue and mammary gland.

The protein localises to the cytoplasm. In terms of biological role, intracellular transport of retinol. The protein is Retinoid-binding protein 7 (Rbp7) of Mus musculus (Mouse).